Here is a 322-residue protein sequence, read N- to C-terminus: Replication factor C small subunit (322 aa).

46–53 (GSAGVGKT) contacts ATP.

The protein belongs to the activator 1 small subunits family. RfcS subfamily. As to quaternary structure, heteromultimer composed of small subunits (RfcS) and large subunits (RfcL).

In terms of biological role, part of the RFC clamp loader complex which loads the PCNA sliding clamp onto DNA. The sequence is that of Replication factor C small subunit from Methanoregula boonei (strain DSM 21154 / JCM 14090 / 6A8).